The following is a 478-amino-acid chain: MAEVIKGRIVQVIGPVVDVEFEGVKELPRIKDGLKTIRRAIDDRGNWFEEVLFMEVAQHIGEHRVRAIAMGPTDGLVRGQEVEYLGGPIKIPVGKEVLGRIFNVAGQPIDEQGPVEAKEYWPMFRNPPELVEQSTKVEILETGIKVIDLLQPIIKGGKVGLFGGAGVGKTVLMQELIHNIARFHEGYSVVVGVGERTREGNDLWLEMKESGVLPYTVMVYGQMNEPPGVRFRVAHTGLTMAEYFRDVEGQDVLIFIDNIFRFVQAGSEVSTLLGRLPSAVGYQPTLNTDVGEVQERITSTKKGSITAIQAVYVPADDITDPAPWSIFAHLDATTVLTRRLAELGIYPAIDPLESTSKYLAPEYVGEEHYEVAMEVKRILQRYKELQEIIAILGMEELSEEDKAIVNRARRIQKFLSQPFHVAEQFTGMPGKYVKLEDTIRSFKEVLTGKYDHLPENAFYMVGTIEDAIEKAKQMGAKV.

An ATP-binding site is contributed by 163–170; sequence GGAGVGKT.

Belongs to the ATPase alpha/beta chains family. F-type ATPases have 2 components, CF(1) - the catalytic core - and CF(0) - the membrane proton channel. CF(1) has five subunits: alpha(3), beta(3), gamma(1), delta(1), epsilon(1). CF(0) has three main subunits: a(1), b(2) and c(9-12). The alpha and beta chains form an alternating ring which encloses part of the gamma chain. CF(1) is attached to CF(0) by a central stalk formed by the gamma and epsilon chains, while a peripheral stalk is formed by the delta and b chains.

The protein localises to the cell inner membrane. It catalyses the reaction ATP + H2O + 4 H(+)(in) = ADP + phosphate + 5 H(+)(out). In terms of biological role, produces ATP from ADP in the presence of a proton gradient across the membrane. The catalytic sites are hosted primarily by the beta subunits. The chain is ATP synthase subunit beta from Aquifex pyrophilus.